The chain runs to 119 residues: uncharacterized protein (119 aa).

Cys-13 is an active-site residue.

It belongs to the ArsC family.

This is an uncharacterized protein from Escherichia coli (strain K12).